A 132-amino-acid polypeptide reads, in one-letter code: Interleukin-5 (132 aa).

An N-terminal signal peptide occupies residues methionine 1–alanine 19. Residues asparagine 74 and asparagine 88 are each glycosylated (N-linked (GlcNAc...) asparagine).

This sequence belongs to the IL-5 family. Homodimer; disulfide-linked. Interacts with IL5RA. Interacts with CSF2RB.

Its subcellular location is the secreted. Homodimeric cytokine expressed predominantly by T-lymphocytes and NK cells that plays an important role in the survival, differentiation, and chemotaxis of eosinophils. Also acts on activated and resting B-cells to induce immunoglobulin production, growth, and differentiation. Mechanistically, exerts its biological effects through a receptor composed of IL5RA subunit and the cytokine receptor common subunit beta/CSF2RB. Binding to the receptor leads to activation of various kinases including LYN, SYK and JAK2 and thereby propagates signals through the RAS-MAPK and JAK-STAT5 pathways respectively. This chain is Interleukin-5 (IL5), found in Ovis aries (Sheep).